Here is a 765-residue protein sequence, read N- to C-terminus: Protein O-mannosyl-transferase 2 (765 aa).

The disordered stretch occupies residues 1 to 31 (MAASVVKTPKCPRRGSVKDVAQNAPRTAPTS). A helical transmembrane segment spans residues 35–55 (ANWNWWLLLATVFLVTFATRF). N-linked (GlcNAc...) asparagine glycans are attached at residues Asn-80, Asn-106, and Asn-119. Helical transmembrane passes span 128-148 (YFCTTLGALIMPMGFDTVYDL), 175-195 (ILLDPILLFFMMASVWGMVKV), 206-226 (GLRWWLWLFLTGTMLSCTISV), 228-248 (FVGLFVVLLVGLHTATELWLI), and 268-288 (ITLIVWPVLLYILFFYIHLSV). N-linked (GlcNAc...) asparagine glycosylation is found at Asn-290 and Asn-314. MIR domains lie at 318–374 (PRDV…IRPH), 384–440 (VQIL…VLIV), and 445–501 (NETV…VEDN). Asn-445 carries N-linked (GlcNAc...) asparagine glycosylation. A run of 4 helical transmembrane segments spans residues 566–586 (IYLLGNPLIWWSNLVFLALFV), 667–687 (LFLGWMLHYLPFWAMGRVLYF), 689–709 (HYFPALIFNSLLTGVMYNYIL), and 719–739 (VILGLVLSILVYSFAAFSPLA). N-linked (GlcNAc...) asparagine glycosylation is present at Asn-751.

Belongs to the glycosyltransferase 39 family. Interacts with Rt/POMT1. At the cellular blastoderm stage, expression accumulates in the ventrally located mesoderm primordium. At germ band extension, mesoderm expression is seen as stripes of strong expression. A very strong signal is also detected in the invaginating gut. As the germ band retracts, mesodermal expression decays and becomes restricted to somatic muscle precursors.

It localises to the endoplasmic reticulum membrane. The catalysed reaction is a di-trans,poly-cis-dolichyl beta-D-mannosyl phosphate + L-seryl-[protein] = 3-O-(alpha-D-mannosyl)-L-seryl-[protein] + a di-trans,poly-cis-dolichyl phosphate + H(+). It carries out the reaction a di-trans,poly-cis-dolichyl beta-D-mannosyl phosphate + L-threonyl-[protein] = 3-O-(alpha-D-mannosyl)-L-threonyl-[protein] + a di-trans,poly-cis-dolichyl phosphate + H(+). The protein operates within protein modification; protein glycosylation. Rt/POMT1 and tw/POMT2 function as a protein O-mannosyltransferase in association with each other to generate and maintain normal muscle development. In Drosophila melanogaster (Fruit fly), this protein is Protein O-mannosyl-transferase 2 (tw).